Consider the following 558-residue polypeptide: CTP synthase (558 aa).

The segment at 1 to 267 is amidoligase domain; sequence MTKFVFVTGG…AQQTLELLNL (267 aa). CTP is bound at residue Ser13. Ser13 serves as a coordination point for UTP. ATP-binding positions include 14 to 19 and Asp71; that span reads SIGKGI. The Mg(2+) site is built by Asp71 and Glu141. Residues 148 to 150, 188 to 193, and Lys224 each bind CTP; these read DIE and KTKPTQ. Residues 188 to 193 and Lys224 each bind UTP; that span reads KTKPTQ. Residues 292-534 form the Glutamine amidotransferase type-1 domain; that stretch reads EVALVGKYVQ…VKASVDYNHV (243 aa). Position 354 (Gly354) interacts with L-glutamine. The active-site Nucleophile; for glutamine hydrolysis is the Cys381. Residues 382-385, Glu405, and Arg462 each bind L-glutamine; that span reads MGMQ. Catalysis depends on residues His507 and Glu509.

The protein belongs to the CTP synthase family. In terms of assembly, homotetramer.

The catalysed reaction is UTP + L-glutamine + ATP + H2O = CTP + L-glutamate + ADP + phosphate + 2 H(+). The enzyme catalyses L-glutamine + H2O = L-glutamate + NH4(+). It catalyses the reaction UTP + NH4(+) + ATP = CTP + ADP + phosphate + 2 H(+). It functions in the pathway pyrimidine metabolism; CTP biosynthesis via de novo pathway; CTP from UDP: step 2/2. Allosterically activated by GTP, when glutamine is the substrate; GTP has no effect on the reaction when ammonia is the substrate. The allosteric effector GTP functions by stabilizing the protein conformation that binds the tetrahedral intermediate(s) formed during glutamine hydrolysis. Inhibited by the product CTP, via allosteric rather than competitive inhibition. Its function is as follows. Catalyzes the ATP-dependent amination of UTP to CTP with either L-glutamine or ammonia as the source of nitrogen. Regulates intracellular CTP levels through interactions with the four ribonucleotide triphosphates. This Gloeothece citriformis (strain PCC 7424) (Cyanothece sp. (strain PCC 7424)) protein is CTP synthase.